The sequence spans 386 residues: MSKNYLFTSESVSEGHPDKLADQISDAILDEILKQDKNARVACETLVKTGMALVAGEITTSAWIDIEELVRKVIVETGYDNANKGIDGRTCSVINAIGKQSSDIAQGVDRGSLEDLGAGDQGLMFGFATNETPTLMPSAIYYSHLLMRKQAEHRKSGKLGWLRPDAKAQVTLAYENDKPKFIDTIVLSTQHNESISQKDLHDAVIEEIVKEVIPAELITKDTKYHINPTGVFLIGGPQGDCGLTGRKIIVDTYGGAAHHGGGAFSGKDPSKVDRSGAYMGRYIAKNVVAAGLADKCEVQVAYAIGVAKPVSLMVNTFGTGKISDSKIEKLVSETFDLRVGKIIENLDLLRPIYRKTSNYGHFGRELPEFTWEKIDKADNLKSAAKI.

His16 lines the ATP pocket. Asp18 contacts Mg(2+). Residue Glu44 participates in K(+) binding. Residues Glu57 and Gln100 each contribute to the L-methionine site. Positions 100–110 (QSSDIAQGVDR) are flexible loop. ATP contacts are provided by residues 165 to 167 (DAK), Asp240, 246 to 247 (RK), Ala263, and Lys267. Asp240 lines the L-methionine pocket. Lys271 provides a ligand contact to L-methionine.

Belongs to the AdoMet synthase family. As to quaternary structure, homotetramer; dimer of dimers. It depends on Mg(2+) as a cofactor. Requires K(+) as cofactor.

Its subcellular location is the cytoplasm. It carries out the reaction L-methionine + ATP + H2O = S-adenosyl-L-methionine + phosphate + diphosphate. It functions in the pathway amino-acid biosynthesis; S-adenosyl-L-methionine biosynthesis; S-adenosyl-L-methionine from L-methionine: step 1/1. Its function is as follows. Catalyzes the formation of S-adenosylmethionine (AdoMet) from methionine and ATP. The overall synthetic reaction is composed of two sequential steps, AdoMet formation and the subsequent tripolyphosphate hydrolysis which occurs prior to release of AdoMet from the enzyme. The polypeptide is S-adenosylmethionine synthase (Francisella philomiragia subsp. philomiragia (strain ATCC 25017 / CCUG 19701 / FSC 153 / O#319-036)).